The primary structure comprises 113 residues: MHEMALTQNIIEIVEEQCRRNHVNKVTDIWLEIGPLSCVEPDAITFCFDVYSKDTVMENCKIHFIPVPALAYCWHCEKTVKIKTHHDACPECGGVHLQKQGGDELRIKEIAVE.

H2 is a binding site for Ni(2+). Zn(2+) contacts are provided by C73, C76, C89, and C92.

Belongs to the HypA/HybF family.

Functionally, involved in the maturation of [NiFe] hydrogenases. Required for nickel insertion into the metal center of the hydrogenase. In Actinobacillus succinogenes (strain ATCC 55618 / DSM 22257 / CCUG 43843 / 130Z), this protein is Hydrogenase maturation factor HypA.